We begin with the raw amino-acid sequence, 173 residues long: Translation initiation factor IF-3 (173 aa).

This sequence belongs to the IF-3 family. In terms of assembly, monomer.

Its subcellular location is the cytoplasm. IF-3 binds to the 30S ribosomal subunit and shifts the equilibrium between 70S ribosomes and their 50S and 30S subunits in favor of the free subunits, thus enhancing the availability of 30S subunits on which protein synthesis initiation begins. The polypeptide is Translation initiation factor IF-3 (Campylobacter lari (strain RM2100 / D67 / ATCC BAA-1060)).